Reading from the N-terminus, the 985-residue chain is Translation initiation factor IF-2 (985 aa).

Basic and acidic residues-rich tracts occupy residues 49–58 (QYGKKQEKSS), 65–89 (IQRE…RPDN), and 99–113 (VPNR…DKAK). The tract at residues 49 to 401 (QYGKKQEKSS…QQSAPPPILD (353 aa)) is disordered. Residues 125–136 (SKTTTNSENEQT) are compositionally biased toward polar residues. Residues 137–162 (APRQGSAQQSGQGRPQANRPQGSQGR) are compositionally biased toward low complexity. 2 stretches are compositionally biased toward gly residues: residues 180–246 (PQGG…GQGR) and 288–324 (PQGG…GAGR). The span at 349–377 (KAPDKTKGDRRKNYEKDGKWADGQIEKNK) shows a compositional bias: basic and acidic residues. The segment covering 378 to 391 (LFKGRNNKNKKRQH) has biased composition (basic residues). The 170-residue stretch at 485–654 (LRPPVVTIMG…LLVAEVHELK (170 aa)) folds into the tr-type G domain. Residues 494 to 501 (GHVDHGKT) are G1. Residue 494-501 (GHVDHGKT) coordinates GTP. Positions 519-523 (GITQH) are G2. The segment at 540 to 543 (DTPG) is G3. Residues 540 to 544 (DTPGH) and 594 to 597 (NKMD) each bind GTP. The G4 stretch occupies residues 594–597 (NKMD). The G5 stretch occupies residues 630–632 (SAK).

It belongs to the TRAFAC class translation factor GTPase superfamily. Classic translation factor GTPase family. IF-2 subfamily.

Its subcellular location is the cytoplasm. In terms of biological role, one of the essential components for the initiation of protein synthesis. Protects formylmethionyl-tRNA from spontaneous hydrolysis and promotes its binding to the 30S ribosomal subunits. Also involved in the hydrolysis of GTP during the formation of the 70S ribosomal complex. The chain is Translation initiation factor IF-2 from Desulforamulus reducens (strain ATCC BAA-1160 / DSM 100696 / MI-1) (Desulfotomaculum reducens).